The sequence spans 655 residues: Kelch-like protein 13 (655 aa).

The 70-residue stretch at 92–161 (CDVTLMPGDT…IYTAKLSLNM (70 aa)) folds into the BTB domain. The 102-residue stretch at 196–297 (CVEVGRIANT…TPQELINYVQ (102 aa)) folds into the BACK domain. Kelch repeat units lie at residues 341–389 (HLVT…VIGN), 390–441 (FLYV…ALKG), 442–488 (YLYA…VYGG), 490–535 (MYIS…TVGE), 537–587 (LYVI…VFEN), and 588–636 (KIYV…TLTV).

As to quaternary structure, component of the BCR(KLHL9-KLHL13) E3 ubiquitin ligase complex, at least composed of CUL3, KLHL9, KLHL13 and RBX1. Interacts with AURKB.

The protein operates within protein modification; protein ubiquitination. Functionally, substrate-specific adapter of a BCR (BTB-CUL3-RBX1) E3 ubiquitin-protein ligase complex required for mitotic progression and cytokinesis. The BCR(KLHL9-KLHL13) E3 ubiquitin ligase complex mediates the ubiquitination of AURKB and controls the dynamic behavior of AURKB on mitotic chromosomes and thereby coordinates faithful mitotic progression and completion of cytokinesis. In Homo sapiens (Human), this protein is Kelch-like protein 13 (KLHL13).